Reading from the N-terminus, the 541-residue chain is Sorting nexin-27 (541 aa).

A disordered region spans residues 1–26 (MADEDGEGIHPAAPHRNGGGGGGGGS). A compositionally biased stretch (gly residues) spans 17-26 (NGGGGGGGGS). The region spanning 43–136 (VVRIVKSESG…ELILTVLSVP (94 aa)) is the PDZ domain. A phosphoserine mark is found at Ser-51 and Ser-62. The PX domain maps to 161 to 269 (QAVPISVPTY…EFLSESDENY (109 aa)). The Ras-associating domain maps to 273–362 (SDVELRVALP…TCLTIRKWLF (90 aa)). An FERM-like region F1 region spans residues 273–362 (SDVELRVALP…TCLTIRKWLF (90 aa)). An FERM-like region F2 region spans residues 373 to 421 (NDLAVTYFFHQAVDDVKKGYIKAEEKSYQLQKLYEQRKMVMYLNMLRTC). An FERM-like region F3 region spans residues 425-525 (NEIIFPHCAC…RVFCELKWRK (101 aa)).

As to quaternary structure, core component of the SNX27-retromer, a multiprotein complex composed of SNX27, the WASH complex and the retromer complex. Interacts (via PDZ domain) with a number of target transmembrane proteins (via PDZ-binding motif): ABCC4, ADRB2, ARHGEF7, GRIA1, GRIA2, GRIN1, GRIN2A GRIN2C, KCNJ6, KCNJ9 and SLC2A1/GLUT1. Interacts (via the FERM-like regions) with the WASH complex. Interacts with SNX1. Interacts with CYTIP. Interacts with DGKZ. Interacts with MCC. Interacts (via PDZ domains) with SLC9A3; directs SLC9A3 membrane insertion from early endosomes to the plasma membrane.

The protein resides in the early endosome membrane. It localises to the cytoplasm. Its subcellular location is the cytosol. Functionally, involved in the retrograde transport from endosome to plasma membrane, a trafficking pathway that promotes the recycling of internalized transmembrane proteins. Following internalization, endocytosed transmembrane proteins are delivered to early endosomes and recycled to the plasma membrane instead of being degraded in lysosomes. SNX27 specifically binds and directs sorting of a subset of transmembrane proteins containing a PDZ-binding motif at the C-terminus: following interaction with target transmembrane proteins, associates with the retromer complex, preventing entry into the lysosomal pathway, and promotes retromer-tubule based plasma membrane recycling. SNX27 also binds with the WASH complex. Interacts with membranes containing phosphatidylinositol-3-phosphate (PtdIns(3P)). May participate in establishment of natural killer cell polarity. Recruits CYTIP to early endosomes. The polypeptide is Sorting nexin-27 (SNX27) (Bos taurus (Bovine)).